We begin with the raw amino-acid sequence, 509 residues long: 5-hydroxytryptamine receptor (509 aa).

Residues 1 to 99 (MANFTFGDLA…YSHEHLVLTS (99 aa)) lie on the Extracellular side of the membrane. N-linked (GlcNAc...) asparagine glycans are attached at residues N3, N47, N58, N68, N72, and N78. Residues 100 to 122 (VILGLFVLCCIIGNCFVIAAVML) traverse the membrane as a helical segment. Residues 123-132 (ERSLHNVANY) lie on the Cytoplasmic side of the membrane. A helical membrane pass occupies residues 133 to 154 (LILSLAVADLMVAVLVMPLSVV). Residues 155–169 (SEISKVWFLHSEVCD) are Extracellular-facing. C168 and C246 are disulfide-bonded. A helical transmembrane segment spans residues 170–191 (MWISVDVLCCTASILHLVAIAM). The Cytoplasmic segment spans residues 192–210 (DRYWAVTSIDYIRRRSARR). The helical transmembrane segment at 211-233 (ILLMIMVVWIVALFISIPPLFGW) threads the bilayer. Residues 234-259 (RDPNNDPDKTGTCIISQDKGYTIFST) are Extracellular-facing. A helical transmembrane segment spans residues 260–281 (VGAFYLPMLVMMIIYIRIWLVA). Over 282 to 432 (RSRIRKDKFQ…LKRERKAART (151 aa)) the chain is Cytoplasmic. Residues 323-372 (SPDSTTEKKKRRAPFKSYGCSPRPERKKNRAKKLPENANGVNSNSSSSER) are disordered. Residues 433 to 456 (LAIITGAFLICWLPFFIIALIGPF) form a helical membrane-spanning segment. Topologically, residues 457–465 (VDPEGIPPF) are extracellular. A helical transmembrane segment spans residues 466-488 (ARSFVLWLGYFNSLLNPIIYTIF). The Cytoplasmic segment spans residues 489–509 (SPEFRSAFQKILFGKYRRGHR).

The protein belongs to the G-protein coupled receptor 1 family.

The protein resides in the cell membrane. This is a receptor for 5-hydroxytryptamine (serotonin), a biogenic hormone that function as a neurotransmitter, a hormone, and a mitogen. This Lymnaea stagnalis (Great pond snail) protein is 5-hydroxytryptamine receptor.